The sequence spans 49 residues: Large ribosomal subunit protein eL40 (49 aa).

This sequence belongs to the eukaryotic ribosomal protein eL40 family.

The protein is Large ribosomal subunit protein eL40 of Natronomonas pharaonis (strain ATCC 35678 / DSM 2160 / CIP 103997 / JCM 8858 / NBRC 14720 / NCIMB 2260 / Gabara) (Halobacterium pharaonis).